The primary structure comprises 433 residues: Homogentisate 1,2-dioxygenase (433 aa).

The active-site Proton acceptor is the H288. Fe cation contacts are provided by H331 and E337. Homogentisate is bound by residues Y346 and H367. H367 contributes to the Fe cation binding site.

Belongs to the homogentisate dioxygenase family. As to quaternary structure, hexamer; dimer of trimers. It depends on Fe cation as a cofactor.

The catalysed reaction is homogentisate + O2 = 4-maleylacetoacetate + H(+). It functions in the pathway amino-acid degradation; L-phenylalanine degradation; acetoacetate and fumarate from L-phenylalanine: step 4/6. In terms of biological role, involved in the catabolism of homogentisate (2,5-dihydroxyphenylacetate or 2,5-OH-PhAc), a central intermediate in the degradation of phenylalanine and tyrosine. Catalyzes the oxidative ring cleavage of the ar omatic ring of 2,5-dihydroxyphenylacetate to yield maleylacetoacetate. The protein is Homogentisate 1,2-dioxygenase of Pseudomonas putida (strain ATCC 47054 / DSM 6125 / CFBP 8728 / NCIMB 11950 / KT2440).